A 408-amino-acid polypeptide reads, in one-letter code: GDSL esterase/lipase At1g54790 (408 aa).

Residues 1 to 24 (MNITKMKLFYVILFFISSLQISNS) form the signal peptide. S38 acts as the Nucleophile in catalysis. N-linked (GlcNAc...) asparagine glycans are attached at residues N273, N289, and N361. Residues D370 and H373 contribute to the active site.

It belongs to the 'GDSL' lipolytic enzyme family.

It localises to the secreted. In Arabidopsis thaliana (Mouse-ear cress), this protein is GDSL esterase/lipase At1g54790.